We begin with the raw amino-acid sequence, 192 residues long: MMEVPREIIEKLEIFQKLVKKWNKSINLVSDNTIHNFWQRHILDSLQLIQYIDNKEIHLVDIGSGAGLPGIVLSIAGVAQVSLIEADLRKCIFLEKASKISNNNVQIINQRIEKVEIDCSILTCRAFSNLNTIFNCIKNISVREKFLLLKGKNYLTEIVEAKERWLFGYLIHQSITCEEGKILEVSNLTKMI.

Residues glycine 63, leucine 68, 112-113 (IE), and arginine 125 each bind S-adenosyl-L-methionine.

This sequence belongs to the methyltransferase superfamily. RNA methyltransferase RsmG family.

The protein localises to the cytoplasm. It catalyses the reaction guanosine(527) in 16S rRNA + S-adenosyl-L-methionine = N(7)-methylguanosine(527) in 16S rRNA + S-adenosyl-L-homocysteine. Functionally, specifically methylates the N7 position of guanine in position 527 of 16S rRNA. The protein is Ribosomal RNA small subunit methyltransferase G of Rickettsia rickettsii (strain Iowa).